The following is a 770-amino-acid chain: Low-density lipoprotein receptor-related protein 3 (770 aa).

The signal sequence occupies residues 1 to 36 (MEKRAAAGLEGAPGARAQLAVVCLVNIFLTGRLSSA). Residues 37–496 (VPALAACSGK…HGCLAAVPRK (460 aa)) lie on the Extracellular side of the membrane. 9 disulfide bridges follow: C43–C72, C99–C120, C166–C178, C173–C191, C185–C200, C212–C227, C219–C240, C234–C249, and C254–C282. Positions 43 to 159 (CSGKLEQHTE…QGFRLSYIRG (117 aa)) constitute a CUB 1 domain. The N-linked (GlcNAc...) asparagine glycan is linked to N71. LDL-receptor class A domains lie at 165–201 (SCQADEFRCDNGKCLPGPWQCNTVDECGDGSDEGNCS) and 211–250 (LCPGGTFPCSGARSTRCLPVERRCDGLQDCGDGSDEAGCP). N-linked (GlcNAc...) asparagine glycosylation occurs at N199. The 112-residue stretch at 254 to 365 (CGRRLGSFYG…HGFNATYQVK (112 aa)) folds into the CUB 2 domain. N359 is a glycosylation site (N-linked (GlcNAc...) asparagine). LDL-receptor class A domains follow at residues 415–453 (ACPPDQYPCEGGSGLCYTPADRCNNQKSCPDGADEKNCF) and 454–490 (SCQPGTFHCGTNLCIFETWRCDGQEDCQDGSDEHGCL). 6 disulfides stabilise this stretch: C416-C430, C423-C443, C437-C452, C455-C467, C462-C480, and C474-C489. Residues 497-517 (VITAALIGSLVCGLLLVIALG) form a helical membrane-spanning segment. At 518–770 (CAFKLYSLRT…ASDDEALLVC (253 aa)) the chain is on the cytoplasmic side. The interval 635-770 (LGDGFLQPAP…ASDDEALLVC (136 aa)) is disordered. Residues 689–707 (RDPECRPVDKDRKVCREPL) are compositionally biased toward basic and acidic residues. A compositionally biased stretch (polar residues) spans 729 to 738 (QVSTASSTLG). Residues 761 to 770 (ASDDEALLVC) are compositionally biased toward acidic residues.

The protein belongs to the LDLR family. As to quaternary structure, binds GGA1 and GGA2. As to expression, widely expressed. Highly expressed in skeletal muscle and ovary. Expressed at intermediate level in heart, brain, liver, pancreas, prostate and small intestine. Weakly expressed in testis, colon and leukocyte.

The protein localises to the membrane. It localises to the coated pit. Functionally, probable receptor, which may be involved in the internalization of lipophilic molecules and/or signal transduction. Its precise role is however unclear, since it does not bind to very low density lipoprotein (VLDL) or to LRPAP1 in vitro. This chain is Low-density lipoprotein receptor-related protein 3 (LRP3), found in Homo sapiens (Human).